The sequence spans 289 residues: Ribosomal protein L11 methyltransferase (289 aa).

4 residues coordinate S-adenosyl-L-methionine: threonine 134, glycine 155, aspartate 177, and asparagine 225.

It belongs to the methyltransferase superfamily. PrmA family.

Its subcellular location is the cytoplasm. It carries out the reaction L-lysyl-[protein] + 3 S-adenosyl-L-methionine = N(6),N(6),N(6)-trimethyl-L-lysyl-[protein] + 3 S-adenosyl-L-homocysteine + 3 H(+). Methylates ribosomal protein L11. This is Ribosomal protein L11 methyltransferase from Parasynechococcus marenigrum (strain WH8102).